Reading from the N-terminus, the 334-residue chain is Ornithine carbamoyltransferase (334 aa).

Carbamoyl phosphate-binding positions include 56–59 (STRT), Gln-83, Arg-107, and 134–137 (HPTQ). L-ornithine contacts are provided by residues Asn-168, Asp-232, and 236 to 237 (SM). Residues 274-275 (CL) and Arg-320 contribute to the carbamoyl phosphate site.

It belongs to the aspartate/ornithine carbamoyltransferase superfamily. OTCase family.

The protein resides in the cytoplasm. It catalyses the reaction carbamoyl phosphate + L-ornithine = L-citrulline + phosphate + H(+). It functions in the pathway amino-acid biosynthesis; L-arginine biosynthesis; L-arginine from L-ornithine and carbamoyl phosphate: step 1/3. Its function is as follows. Reversibly catalyzes the transfer of the carbamoyl group from carbamoyl phosphate (CP) to the N(epsilon) atom of ornithine (ORN) to produce L-citrulline. This is Ornithine carbamoyltransferase from Escherichia coli (strain 55989 / EAEC).